The primary structure comprises 151 residues: Cyanate hydratase (151 aa).

Active-site residues include R92, E95, and S118.

This sequence belongs to the cyanase family.

It carries out the reaction cyanate + hydrogencarbonate + 3 H(+) = NH4(+) + 2 CO2. Its function is as follows. Catalyzes the reaction of cyanate with bicarbonate to produce ammonia and carbon dioxide. The protein is Cyanate hydratase of Coprinopsis cinerea (strain Okayama-7 / 130 / ATCC MYA-4618 / FGSC 9003) (Inky cap fungus).